Consider the following 291-residue polypeptide: MSWSRHWPAPAKINLFLHILGRRPDGYHRLQTAFQILDRGDELAFRVRPDGELRRRGGLDHVPPDQDLTVRAARLLQQTTGCRLGADIVLDKRLPDGGGLGGGSSNAATVLQALNRLWGTGLSTLELAGLGLRLGADVPVFVHGRTAWAEGVGERLTPIETPSRWFLVVHPGCRVSTAEVFAAEGLTRDSAPSTISALRAGRVRNDCEPWVRAHYRAVDEALGWLSRFAPARMTGTGACVFAPFEREAQARAALDRLPAAWQGFVAQGVACSSLLGRLRGEQDSADRDGPT.

Lys-12 is a catalytic residue. 95 to 105 (PDGGGLGGGSS) contacts ATP. Asp-137 is an active-site residue.

It belongs to the GHMP kinase family. IspE subfamily.

The catalysed reaction is 4-CDP-2-C-methyl-D-erythritol + ATP = 4-CDP-2-C-methyl-D-erythritol 2-phosphate + ADP + H(+). It participates in isoprenoid biosynthesis; isopentenyl diphosphate biosynthesis via DXP pathway; isopentenyl diphosphate from 1-deoxy-D-xylulose 5-phosphate: step 3/6. In terms of biological role, catalyzes the phosphorylation of the position 2 hydroxy group of 4-diphosphocytidyl-2C-methyl-D-erythritol. The polypeptide is 4-diphosphocytidyl-2-C-methyl-D-erythritol kinase (Alkalilimnicola ehrlichii (strain ATCC BAA-1101 / DSM 17681 / MLHE-1)).